We begin with the raw amino-acid sequence, 90 residues long: Large ribosomal subunit protein uL16c (90 aa).

Belongs to the universal ribosomal protein uL16 family. Part of the 50S ribosomal subunit.

It is found in the plastid. The protein resides in the chloroplast. In Oenothera ammophila (Evening primerose), this protein is Large ribosomal subunit protein uL16c (rpl16).